The sequence spans 68 residues: Large ribosomal subunit protein bL35 (68 aa).

This sequence belongs to the bacterial ribosomal protein bL35 family.

The polypeptide is Large ribosomal subunit protein bL35 (Onion yellows phytoplasma (strain OY-M)).